A 490-amino-acid polypeptide reads, in one-letter code: Probable cytosol aminopeptidase (490 aa).

Lys-262 and Asp-267 together coordinate Mn(2+). Residue Lys-274 is part of the active site. 3 residues coordinate Mn(2+): Asp-285, Asp-344, and Glu-346. The active site involves Arg-348.

Belongs to the peptidase M17 family. Mn(2+) serves as cofactor.

Its subcellular location is the cytoplasm. It catalyses the reaction Release of an N-terminal amino acid, Xaa-|-Yaa-, in which Xaa is preferably Leu, but may be other amino acids including Pro although not Arg or Lys, and Yaa may be Pro. Amino acid amides and methyl esters are also readily hydrolyzed, but rates on arylamides are exceedingly low.. The enzyme catalyses Release of an N-terminal amino acid, preferentially leucine, but not glutamic or aspartic acids.. Presumably involved in the processing and regular turnover of intracellular proteins. Catalyzes the removal of unsubstituted N-terminal amino acids from various peptides. This is Probable cytosol aminopeptidase from Xanthomonas oryzae pv. oryzae (strain MAFF 311018).